A 38-amino-acid polypeptide reads, in one-letter code: Photosystem II reaction center protein M (38 aa).

A helical membrane pass occupies residues 7–27 (GFVASILFVLVPSVFLIILYI).

This sequence belongs to the PsbM family. PSII is composed of 1 copy each of membrane proteins PsbA, PsbB, PsbC, PsbD, PsbE, PsbF, PsbH, PsbI, PsbJ, PsbK, PsbL, PsbM, PsbT, PsbX, PsbY, PsbZ, Psb30/Ycf12, peripheral proteins PsbO, CyanoQ (PsbQ), PsbU, PsbV and a large number of cofactors. It forms dimeric complexes.

Its subcellular location is the cellular thylakoid membrane. Its function is as follows. One of the components of the core complex of photosystem II (PSII). PSII is a light-driven water:plastoquinone oxidoreductase that uses light energy to abstract electrons from H(2)O, generating O(2) and a proton gradient subsequently used for ATP formation. It consists of a core antenna complex that captures photons, and an electron transfer chain that converts photonic excitation into a charge separation. This subunit is found at the monomer-monomer interface. This is Photosystem II reaction center protein M from Nostoc sp. (strain PCC 7120 / SAG 25.82 / UTEX 2576).